Consider the following 240-residue polypeptide: Uridylate kinase (240 aa).

13–16 (KASG) serves as a coordination point for ATP. The segment at 21 to 26 (GSQGFG) is involved in allosteric activation by GTP. Residue Gly55 participates in UMP binding. The ATP site is built by Gly56 and Arg60. Residues Asp75 and 136–143 (TGNPFFTT) contribute to the UMP site. 4 residues coordinate ATP: Thr163, Gln164, Tyr169, and Asp172.

It belongs to the UMP kinase family. In terms of assembly, homohexamer.

The protein localises to the cytoplasm. The enzyme catalyses UMP + ATP = UDP + ADP. It participates in pyrimidine metabolism; CTP biosynthesis via de novo pathway; UDP from UMP (UMPK route): step 1/1. Allosterically activated by GTP. Inhibited by UTP. In terms of biological role, catalyzes the reversible phosphorylation of UMP to UDP. This Brucella abortus biovar 1 (strain 9-941) protein is Uridylate kinase.